A 92-amino-acid chain; its full sequence is Long neurotoxin 1 (92 aa).

The first 21 residues, 1 to 21 (MKILLLTLVVVTIVCLDLAYT), serve as a signal peptide directing secretion. Disulfide bonds link Cys24–Cys41, Cys34–Cys62, Cys47–Cys51, Cys66–Cys77, and Cys78–Cys83.

The protein belongs to the three-finger toxin family. Long-chain subfamily. Type II alpha-neurotoxin sub-subfamily. Expressed by the venom gland.

The protein resides in the secreted. Binds with high affinity to muscular (alpha-1/CHRNA1) and neuronal (alpha-7/CHRNA7) nicotinic acetylcholine receptor (nAChR) and inhibits acetylcholine from binding to the receptor, thereby impairing neuromuscular and neuronal transmission. In Hydrophis hardwickii (Hardwick's spine-bellied seasnake), this protein is Long neurotoxin 1.